We begin with the raw amino-acid sequence, 166 residues long: Lipoprotein signal peptidase (166 aa).

Transmembrane regions (helical) follow at residues 12 to 32 (WLWV…LILQ), 70 to 90 (WFFS…MYRS), and 102 to 122 (ALII…GFVV). Residues Asp-123 and Asp-141 contribute to the active site. The chain crosses the membrane as a helical span at residues 137–157 (FNLADSAICIGAALIVLEGFL).

The protein belongs to the peptidase A8 family.

Its subcellular location is the cell inner membrane. The enzyme catalyses Release of signal peptides from bacterial membrane prolipoproteins. Hydrolyzes -Xaa-Yaa-Zaa-|-(S,diacylglyceryl)Cys-, in which Xaa is hydrophobic (preferably Leu), and Yaa (Ala or Ser) and Zaa (Gly or Ala) have small, neutral side chains.. The protein operates within protein modification; lipoprotein biosynthesis (signal peptide cleavage). In terms of biological role, this protein specifically catalyzes the removal of signal peptides from prolipoproteins. This Klebsiella pneumoniae subsp. pneumoniae (strain ATCC 700721 / MGH 78578) protein is Lipoprotein signal peptidase.